Consider the following 148-residue polypeptide: uncharacterized protein (148 aa).

An HTH asnC-type domain is found at 4 to 65 (MDKVDLQLIK…IPNLEKLNYM (62 aa)). The segment at residues 23–42 (YRELAEMLGTTRQRVARKVD) is a DNA-binding region (H-T-H motif).

This is an uncharacterized protein from Pyrococcus furiosus (strain ATCC 43587 / DSM 3638 / JCM 8422 / Vc1).